Consider the following 543-residue polypeptide: MGDDGKKNGAEGGLVKVDPKPTNGFSSKVIDLLEKLLVKFLYDSSLPHHYLTGNFGPVTETPPTKDLPVKGHLPDCLNGEFVRVGPNPKFAPVAGYHWFDGDGMIHGLRIKDGKATYVSRFVETSRLKQEEYFGRSKFMKIGDLKGLFGLLMVNIHMLRTKLKVLDLSYGGGTTNTALVYHHGKLLALSEADKPYAIKVFEDGDLQTLGMLDYDKRLGHSFTAHPKVDPFTGEMFSFGYAHTPPYITYRVISKDGYMHDPVPITISDPIMMHDFAITENYAVFMDLPLIFRPKEMVKNKTLIFSFDSTKKARFGVLPRYAKDEQHIRWFELPNCFIFHNANAWEEEDEVVLITCRLQNPKLDNVGGTVQEKLENFSNELYEMRFNMKTGEASQKKLSASTVDFPRVNENYTGRKQRYVYGTTLDSIAKVTGIIKFDLHAEPDHGKEKLEVGGNVQGLYDLGPGKFGSEAVYIPRVPGIESEEDDGYLVLFVHDENAGKSFVHVIDAKTMSADPVAVVELPNRVPYGFHAFFVTEEQLQEQAKL.

Residues histidine 224, histidine 272, histidine 338, and histidine 528 each coordinate Fe cation.

It belongs to the carotenoid oxygenase family. In terms of assembly, homodimer. Fe(2+) is required as a cofactor.

The enzyme catalyses all-trans-zeaxanthin + 2 O2 = 4,9-dimethyldodeca-2,4,6,8,10-pentaenedial + 2 (3R)-hydroxy-beta-ionone. Cleaves a variety of carotenoids at the 9-10 and 9'-10' double bonds. Probably not involved in abscisic acid biosynthesis. This Phaseolus vulgaris (Kidney bean) protein is Carotenoid 9,10(9',10')-cleavage dioxygenase 1 (CCD1).